An 89-amino-acid polypeptide reads, in one-letter code: Probable Fe(2+)-trafficking protein (89 aa).

Belongs to the Fe(2+)-trafficking protein family.

Its function is as follows. Could be a mediator in iron transactions between iron acquisition and iron-requiring processes, such as synthesis and/or repair of Fe-S clusters in biosynthetic enzymes. This chain is Probable Fe(2+)-trafficking protein, found in Legionella pneumophila (strain Paris).